We begin with the raw amino-acid sequence, 303 residues long: MSQKKSFQGLILTLQEFWAAQGCVILQPYDMEVGAGTFHPATTLRALGPKPWKAAYVQPSRRPKDGRYGENPNRLQHYYQFQVILKPNPPNLQELYLASLAAIGVDLKLHDIRFVEDDWESPTLGAWGLGWECWCDGMEVSQFTYFQQVAGFECAPVAGELTYGLERLAMYVQGVENVYDLDFNGAEGPDRITYGDVFLQAEQEYSRHNFEAADTAMLFRQFTDAEAACRSYLAAGAPDAEGARHRMAQPAYDQCIKASHVFNLLDARGVISVTERQSYILRVRELAKACGAAWLKTAAGGAP.

Belongs to the class-II aminoacyl-tRNA synthetase family. In terms of assembly, tetramer of two alpha and two beta subunits.

It is found in the cytoplasm. The enzyme catalyses tRNA(Gly) + glycine + ATP = glycyl-tRNA(Gly) + AMP + diphosphate. The polypeptide is Glycine--tRNA ligase alpha subunit (Methylobacterium radiotolerans (strain ATCC 27329 / DSM 1819 / JCM 2831 / NBRC 15690 / NCIMB 10815 / 0-1)).